The following is a 138-amino-acid chain: DASH complex subunit DAD2 (138 aa).

The span at 1–14 (MSGFSSRPLSTHLR) shows a compositional bias: polar residues. Disordered regions lie at residues 1-25 (MSGF…QGQS) and 116-138 (PTEH…SGRG).

The protein belongs to the DASH complex DAD2 family. In terms of assembly, component of the DASH complex consisting of ASK1, DAD1, DAD2, DAD3, DAD4, DAM1, DUO1, HSK3, SPC19 and SPC34, with a stoichiometry of one copy of each subunit per complex. Multiple DASH complexes oligomerize to form a ring that encircles spindle microtubules and organizes the rod-like NDC80 complexes of the outer kinetochore. DASH complex oligomerization strengthens microtubule attachments. On cytoplasmic microtubules, DASH complexes appear to form patches instead of rings.

The protein localises to the chromosome. The protein resides in the centromere. It localises to the kinetochore. It is found in the cytoplasm. Its subcellular location is the cytoskeleton. The protein localises to the spindle. The protein resides in the nucleus. Component of the DASH complex that connects microtubules with kinetochores and couples microtubule depolymerisation to chromosome movement; it is involved in retrieving kinetochores to the spindle poles before their re-orientation on the spindle in early mitosis and allows microtubule depolymerization to pull chromosomes apart and resist detachment during anaphase. Kinetochores, consisting of a centromere-associated inner segment and a microtubule-contacting outer segment, play a crucial role in chromosome segregation by mediating the physical connection between centromeric DNA and microtubules. Kinetochores also serve as an input point for the spindle assembly checkpoint, which delays anaphase until all chromosomes have bioriented on the mitotic spindle. This is DASH complex subunit DAD2 from Chaetomium thermophilum (strain DSM 1495 / CBS 144.50 / IMI 039719) (Thermochaetoides thermophila).